A 78-amino-acid chain; its full sequence is Large ribosomal subunit protein bL28 (78 aa).

The disordered stretch occupies residues 1–20; sequence MSRVCQVTGKRPVTGNNRSH.

The protein belongs to the bacterial ribosomal protein bL28 family.

The chain is Large ribosomal subunit protein bL28 from Vibrio campbellii (strain ATCC BAA-1116).